We begin with the raw amino-acid sequence, 193 residues long: Ion-translocating oxidoreductase complex subunit A (193 aa).

6 helical membrane-spanning segments follow: residues 5-25 (LLLFVGTVLVNNFVLVKFLGL), 47-67 (FVMTLASICAWLIDTWILIPL), 72-92 (LRTLAFILVIAVVVQFTEMVV), 102-122 (LLGIFLPLITTNCAVLGVALL), 134-154 (ALYGFSAAVGFSLVMVLFAAI), and 171-191 (AIALITAGLMSLAFMGFSGLV).

This sequence belongs to the NqrDE/RnfAE family. In terms of assembly, the complex is composed of six subunits: RsxA, RsxB, RsxC, RsxD, RsxE and RsxG.

Its subcellular location is the cell inner membrane. In terms of biological role, part of a membrane-bound complex that couples electron transfer with translocation of ions across the membrane. Required to maintain the reduced state of SoxR. This is Ion-translocating oxidoreductase complex subunit A from Salmonella agona (strain SL483).